The primary structure comprises 759 residues: TY1 enhancer activator (759 aa).

The disordered stretch occupies residues 1–61; sequence MTAPLWPNKN…GTGANTLTNG (61 aa). The residue at position 22 (T22) is a Phosphothreonine. Over residues 30–51 the composition is skewed to low complexity; it reads SSTNASSNEENSRSSSAANVRS. The zn(2)-C6 fungal-type DNA-binding region spans 70-96; that stretch reads CTNCRNRRKKCDLGFPCGNCSRLELVC. A disordered region spans residues 229–254; that stretch reads LTPQGEKKKKPLVKGSLYPEGPVSYK. The 9aaTAD signature appears at 744 to 752; the sequence is DDLIRELFG. T755 is subject to Phosphothreonine.

Its subcellular location is the nucleus. Its function is as follows. TY1 element enhancer binding protein. Binds to the DNA sequence 5'-TCGGTGGTATTATTCCGA-3'. This is TY1 enhancer activator (TEA1) from Saccharomyces cerevisiae (strain ATCC 204508 / S288c) (Baker's yeast).